The primary structure comprises 159 residues: Protein-export protein SecB (159 aa).

The protein belongs to the SecB family. Homotetramer, a dimer of dimers. One homotetramer interacts with 1 SecA dimer.

The protein localises to the cytoplasm. One of the proteins required for the normal export of preproteins out of the cell cytoplasm. It is a molecular chaperone that binds to a subset of precursor proteins, maintaining them in a translocation-competent state. It also specifically binds to its receptor SecA. This Pseudomonas fluorescens (strain SBW25) protein is Protein-export protein SecB.